The sequence spans 347 residues: Virulence plasmid protein pGP2-D (347 aa).

The polypeptide is Virulence plasmid protein pGP2-D (Chlamydia psittaci (Chlamydophila psittaci)).